The following is a 54-amino-acid chain: Zinc-containing ferredoxin A (54 aa).

The interval 1–21 (GIDPNYRTSRPEVGTHEGHKV) is disordered. Residues 1–36 (GIDPNYRTSRPEVGTHEGHKVYGPVENPKVLGIHGA) are N-terminal extension. The segment covering 9–20 (SRPEVGTHEGHK) has biased composition (basic and acidic residues). 2 residues coordinate Zn(2+): H16 and H19. An N6-methyllysine modification is found at K29. H34 is a Zn(2+) binding site. Positions 35-54 (GAIVGVDFDLCIADGSCINA) constitute a 4Fe-4S ferredoxin-type 1 domain. [3Fe-4S] cluster-binding residues include C45 and C51.

[3Fe-4S] cluster serves as cofactor. The cofactor is [4Fe-4S] cluster. Zn(2+) is required as a cofactor.

Its function is as follows. Ferredoxins are iron-sulfur proteins that transfer electrons in a wide variety of metabolic reactions. This chain is Zinc-containing ferredoxin A (zfx), found in Sulfuracidifex metallicus (Sulfolobus metallicus).